We begin with the raw amino-acid sequence, 195 residues long: Molybdenum cofactor guanylyltransferase (195 aa).

Residues 10 to 12 (LAG), Lys23, Asn51, Asp69, and Asp99 each bind GTP. Asp99 is a binding site for Mg(2+).

This sequence belongs to the MobA family. As to quaternary structure, monomer. Mg(2+) is required as a cofactor.

Its subcellular location is the cytoplasm. It catalyses the reaction Mo-molybdopterin + GTP + H(+) = Mo-molybdopterin guanine dinucleotide + diphosphate. Its function is as follows. Transfers a GMP moiety from GTP to Mo-molybdopterin (Mo-MPT) cofactor (Moco or molybdenum cofactor) to form Mo-molybdopterin guanine dinucleotide (Mo-MGD) cofactor. The polypeptide is Molybdenum cofactor guanylyltransferase (Shewanella putrefaciens (strain CN-32 / ATCC BAA-453)).